The chain runs to 219 residues: Isovaleryl-homoserine lactone synthase (219 aa).

Belongs to the autoinducer synthase family.

The enzyme catalyses 3-methylbutanoyl-CoA + S-adenosyl-L-methionine = N-isovaleryl-L-homoserine lactone + S-methyl-5'-thioadenosine + CoA + H(+). In terms of biological role, catalyzes the synthesis of IV-HSL (isovaleryl-homoserine lactone), a quorum-sensing (QS) autoinducer molecule which binds to BjaR1 transcriptional regulator to activate expression of QS-dependent genes. Is active with isovaleryl-CoA but cannot use isovaleryl-ACP as acyl donor. The chain is Isovaleryl-homoserine lactone synthase (bjaI) from Bradyrhizobium diazoefficiens (strain JCM 10833 / BCRC 13528 / IAM 13628 / NBRC 14792 / USDA 110).